Consider the following 406-residue polypeptide: Transposase for insertion sequence element IS1001 (406 aa).

It belongs to the transposase 12 family.

In terms of biological role, involved in the transposition of the insertion sequence. This chain is Transposase for insertion sequence element IS1001 (tnpA), found in Bordetella parapertussis.